A 350-amino-acid chain; its full sequence is Casein kinase II subunit alpha' (350 aa).

A Protein kinase domain is found at Y40–F325. Residues L46–V54 and K69 each bind ATP. Residue D157 is the Proton acceptor of the active site.

This sequence belongs to the protein kinase superfamily. Ser/Thr protein kinase family. CK2 subfamily. In terms of assembly, tetramer composed of an alpha chain, an alpha' and two beta chains.

It carries out the reaction L-seryl-[protein] + ATP = O-phospho-L-seryl-[protein] + ADP + H(+). The catalysed reaction is L-threonyl-[protein] + ATP = O-phospho-L-threonyl-[protein] + ADP + H(+). Functionally, casein kinases are operationally defined by their preferential utilization of acidic proteins such as caseins as substrates. The alpha and alpha' chains contain the catalytic site. Participates in Wnt signaling. The polypeptide is Casein kinase II subunit alpha' (Gallus gallus (Chicken)).